The following is a 200-amino-acid chain: Ciliary microtubule inner protein 2C (200 aa).

It belongs to the CIMIP2 family. In terms of assembly, microtubule inner protein component of sperm flagellar doublet microtubules.

It localises to the cytoplasm. It is found in the cytoskeleton. The protein localises to the cilium axoneme. Its subcellular location is the flagellum axoneme. Its function is as follows. Microtubule inner protein (MIP) part of the dynein-decorated doublet microtubules (DMTs) in cilia axoneme, which is required for motile cilia beating. Binds to the intra-tubulin interfaces. In Mus musculus (Mouse), this protein is Ciliary microtubule inner protein 2C (Cimip2c).